The primary structure comprises 1309 residues: Nuclear pore complex protein NUP1 (1309 aa).

Disordered stretches follow at residues 1-58, 83-118, 173-210, 266-296, 329-348, 384-417, 467-538, 594-617, and 635-680; these read MASA…GGGW, RKRL…HKED, AADS…GSMN, RTPF…VTPR, SKWE…SGLK, ESPL…NLVP, LGNL…EEHP, SEAM…NGSL, and SNMA…VFPN. Residues 2–677 form a 25 X 2 AA repeats of F-G region; it reads ASAARGESSN…LEEPKKPAAV (676 aa). A compositionally biased stretch (basic residues) spans 22 to 32; sequence KFRKPTARRSQ. The segment covering 47-58 has biased composition (gly residues); it reads GLGGGDVRGGGW. Positions 91–101 are enriched in polar residues; that stretch reads TPLQSPEQQKQ. A compositionally biased stretch (basic and acidic residues) spans 195 to 204; that stretch reads PSHERDRTHP. The segment covering 268–283 has biased composition (polar residues); that stretch reads PFPQKSPTMSLVTKPS. Residues 396–405 are compositionally biased toward basic and acidic residues; it reads KTTHTSKDSA. Composition is skewed to polar residues over residues 597–617 and 635–659; these read MPST…NGSL and SNMA…SGKP. Over residues 660 to 673 the composition is skewed to basic and acidic residues; it reads TSEEKRIPLEEPKK. Residues 711–712 form repeat 1; the sequence is FG. The interval 719 to 865 is disordered; the sequence is KPTESKKTFS…VKNATFGNTS (147 aa). 2 stretches are compositionally biased toward low complexity: residues 728–741 and 767–783; these read SNSA…TSAA and SSPS…SDNS. Polar residues predominate over residues 789 to 803; the sequence is STVQSFAATHNSSSI. The stretch at 804–805 is repeat 2; the sequence is FG. Residues 809–827 are compositionally biased toward low complexity; sequence TSNDSNSQSTSASPLSSTS. 12 consecutive repeat copies span residues 831 to 832, 861 to 862, 869 to 870, 883 to 884, 898 to 899, 927 to 928, 956 to 957, 983 to 984, 1004 to 1005, 1029 to 1030, 1038 to 1039, and 1053 to 1054. Positions 1004-1023 are enriched in low complexity; it reads FGAGNAQTGNTGSGTTTSTQ. Positions 1004–1028 are disordered; it reads FGAGNAQTGNTGSGTTTSTQSIPFQ. The segment covering 1068–1086 has biased composition (low complexity); it reads TPQLSSTNSSASSSSTMSS. Residues 1068 to 1105 form a disordered region; sequence TPQLSSTNSSASSSSTMSSPLFGTSWQAPNSSPNSGPV. Repeat 15 spans residues 1089–1090; sequence FG. A compositionally biased stretch (low complexity) spans 1096 to 1105; it reads PNSSPNSGPV. 10 tandem repeats follow at residues 1121 to 1122, 1137 to 1138, 1151 to 1152, 1153 to 1154, 1166 to 1167, 1177 to 1178, 1186 to 1187, 1224 to 1225, 1238 to 1239, and 1255 to 1256. The disordered stretch occupies residues 1278 to 1309; that stretch reads FQGGGSFSLGSTGGGDKSGRRIFKAKKSTRKK. Residues 1279–1293 show a composition bias toward gly residues; it reads QGGGSFSLGSTGGGD. Residues 1297-1309 are compositionally biased toward basic residues; it reads RRIFKAKKSTRKK.

As to quaternary structure, part of the nuclear pore complex (NPC). The NPC has an eight-fold symmetrical structure comprising a central transport channel and two rings, the cytoplasmic and nuclear rings, to which eight filaments are attached. The cytoplasmic filaments have loose ends, while the nuclear filaments are joined in a distal ring, forming a nuclear basket. NPCs are highly dynamic in configuration and composition, and can be devided in 3 subcomplexes, the NUP62 subcomplex, the NUP107-160 subcomplex and the NUP93 subcomplex, containing approximately 30 different nucleoporin proteins. Interacts with EER5, anchoring the TREX-2 complex on the nuclear pore complex. Interacts with UCH1 and UCH2.

The protein localises to the nucleus envelope. It is found in the nucleus. The protein resides in the nuclear pore complex. Its subcellular location is the cytoplasm. It localises to the cytosol. Its function is as follows. Nucleoporin required for nuclear mRNA export. Functions as an adapter and/or regulator molecule in the periphery of the nuclear pore complex (NPC). May interact with importin proteins and mediate active nucleocytoplasmic transport through the NPC. Involved in regulation of nuclear morphology. This chain is Nuclear pore complex protein NUP1, found in Arabidopsis thaliana (Mouse-ear cress).